A 201-amino-acid polypeptide reads, in one-letter code: NADH-quinone oxidoreductase subunit I (201 aa).

2 4Fe-4S ferredoxin-type domains span residues 78 to 107 (MSYE…RIEA) and 116 to 147 (KVVR…MTDI). Residues cysteine 87, cysteine 90, cysteine 93, cysteine 97, cysteine 127, cysteine 130, cysteine 133, and cysteine 137 each contribute to the [4Fe-4S] cluster site.

This sequence belongs to the complex I 23 kDa subunit family. As to quaternary structure, NDH-1 is composed of 14 different subunits. Subunits NuoA, H, J, K, L, M, N constitute the membrane sector of the complex. [4Fe-4S] cluster is required as a cofactor.

It localises to the cell inner membrane. The catalysed reaction is a quinone + NADH + 5 H(+)(in) = a quinol + NAD(+) + 4 H(+)(out). NDH-1 shuttles electrons from NADH, via FMN and iron-sulfur (Fe-S) centers, to quinones in the respiratory chain. The immediate electron acceptor for the enzyme in this species is believed to be ubiquinone. Couples the redox reaction to proton translocation (for every two electrons transferred, four hydrogen ions are translocated across the cytoplasmic membrane), and thus conserves the redox energy in a proton gradient. This is NADH-quinone oxidoreductase subunit I from Aquifex aeolicus (strain VF5).